A 74-amino-acid chain; its full sequence is Large ribosomal subunit protein uL29 (74 aa).

It belongs to the universal ribosomal protein uL29 family.

This is Large ribosomal subunit protein uL29 from Cyanothece sp. (strain PCC 7425 / ATCC 29141).